The following is a 469-amino-acid chain: Zinc finger and BTB domain-containing protein 8A.1-B (469 aa).

Positions 24–92 constitute a BTB domain; it reads CDCHIIVEGQ…VYSGKLPLSG (69 aa). 2 C2H2-type zinc fingers span residues 315–337 and 343–366; these read FKCP…LRCH and YPCE…QTIH.

It is found in the nucleus. Functionally, may be involved in transcriptional regulation. The chain is Zinc finger and BTB domain-containing protein 8A.1-B (zbtb8a.1-b) from Xenopus laevis (African clawed frog).